Reading from the N-terminus, the 29-residue chain is ATP synthase subunit 9, mitochondrial (29 aa).

This sequence belongs to the ATPase C chain family. As to quaternary structure, F-type ATPases have 2 components, CF(1) - the catalytic core - and CF(0) - the membrane proton channel. CF(1) has five subunits: alpha(3), beta(3), gamma(1), delta(1), epsilon(1). CF(0) has three main subunits: a, b and c.

The protein resides in the mitochondrion membrane. Mitochondrial membrane ATP synthase (F(1)F(0) ATP synthase or Complex V) produces ATP from ADP in the presence of a proton gradient across the membrane which is generated by electron transport complexes of the respiratory chain. F-type ATPases consist of two structural domains, F(1) - containing the extramembraneous catalytic core and F(0) - containing the membrane proton channel, linked together by a central stalk and a peripheral stalk. During catalysis, ATP synthesis in the catalytic domain of F(1) is coupled via a rotary mechanism of the central stalk subunits to proton translocation. Part of the complex F(0) domain. A homomeric c-ring of probably 10 subunits is part of the complex rotary element. This Wickerhamomyces pijperi (Yeast) protein is ATP synthase subunit 9, mitochondrial (ATP9).